Consider the following 870-residue polypeptide: NEDD4-like E3 ubiquitin-protein ligase WWP2 (870 aa).

Positions 1-117 constitute a C2 domain; the sequence is MASASSSRAG…KNNGGKMENT (117 aa). The disordered stretch occupies residues 150–300; the sequence is SVPNGSAVTD…QLPAAAQAPD (151 aa). The segment covering 152-171 has biased composition (polar residues); sequence PNGSAVTDGSQPPSRESSGT. Over residues 198–208 the composition is skewed to low complexity; sequence GGSARTATAAS. Phosphoserine is present on S211. 2 stretches are compositionally biased toward polar residues: residues 222-235 and 262-289; these read VKNS…NGTV and SVSS…TSGT. Positions 290–300 are enriched in low complexity; it reads QQLPAAAQAPD. 4 WW domains span residues 300–333, 330–363, 405–437, and 444–477; these read DALP…RPLP, RPLP…RPTA, GPLP…DPRT, and PALP…DPRP. One can recognise an HECT domain in the interval 536-870; the sequence is KPYDLRRRLY…IEETEGFGQE (335 aa). C838 (glycyl thioester intermediate) is an active-site residue.

In terms of assembly, interacts with SCNN1A, SCNN1B, SCNN1G, WBP1, WBP2 and ATN1. Interacts with ERBB4, NDFIP1 and NDFIP2. Interacts with ARRDC4. Interacts with POU5F1, RBP1, EGR2 and SLC11A2. Interacts (via WW domains) with ARRDC1 (via PPxY motifs); ubiquitinates ARRDC1. Interacts (via WW domains) with ARRDC2 and ARRDC3. In terms of processing, autoubiquitinated. Ubiquitinated by the SCF(FBXL15) complex, leading to its degradation by the proteasome.

It localises to the nucleus. It catalyses the reaction S-ubiquitinyl-[E2 ubiquitin-conjugating enzyme]-L-cysteine + [acceptor protein]-L-lysine = [E2 ubiquitin-conjugating enzyme]-L-cysteine + N(6)-ubiquitinyl-[acceptor protein]-L-lysine.. The protein operates within protein modification; protein ubiquitination. Activated by NDFIP1- and NDFIP2-binding. Its function is as follows. E3 ubiquitin-protein ligase which accepts ubiquitin from an E2 ubiquitin-conjugating enzyme in the form of a thioester and then directly transfers the ubiquitin to targeted substrates. Polyubiquitinates POU5F1 by 'Lys-63'-linked conjugation and promotes it to proteasomal degradation; regulates POU5F1 protein level during differentiation of embryonal carcinoma cells (ECCs) but not in undifferentiated ECCs and embryonic stem cells (ESCs). Ubiquitinates EGR2 and promotes it to proteasomal degradation; in T-cells the ubiquitination inhibits activation-induced cell death. Ubiquitinates SLC11A2; the ubiquitination is enhanced by presence of NDFIP1 and NDFIP2. Ubiquitinates RPB1 and promotes it to proteasomal degradation. This Mus musculus (Mouse) protein is NEDD4-like E3 ubiquitin-protein ligase WWP2 (Wwp2).